The following is a 363-amino-acid chain: MQLPISQYNELLQKKLEKLTALLRPFNAPDIQVFDSPTSHYRMRAEFRIWHEQDDFYHIMFDQATLQRYRVDEFPIASTQINRMMQTLLPLLKQQEVLHKKLFQIDYLSTLSNKIIVSLLYHKTLTEEWESAAKNLKDLLEKQGFNVQIIGRASKQKICFEQDYVDEVLPVNGRNYVYRQVENSFTQPNATVNCKMLEWAIDCTQNSEGDLLELYCGNGNFSIALAQNFRKVLATEIAKPSVAAAQFNIAENKVDNLQIIRMSAEEFTQAMNGVRAFNRLKGIDLKSYECNTIFVDPPRAGLDPDTVKLVQNYDRILYISCNPHTLCDNLVELSKTHRIEKAALFDQFPYTDHMESGVWLIRK.

Positions 187, 215, 220, 236, and 296 each coordinate S-adenosyl-L-methionine. The active-site Nucleophile is the Cys-321. Glu-355 acts as the Proton acceptor in catalysis.

This sequence belongs to the class I-like SAM-binding methyltransferase superfamily. RNA M5U methyltransferase family. TrmA subfamily.

The catalysed reaction is uridine(54) in tRNA + S-adenosyl-L-methionine = 5-methyluridine(54) in tRNA + S-adenosyl-L-homocysteine + H(+). It carries out the reaction uridine(341) in tmRNA + S-adenosyl-L-methionine = 5-methyluridine(341) in tmRNA + S-adenosyl-L-homocysteine + H(+). Dual-specificity methyltransferase that catalyzes the formation of 5-methyluridine at position 54 (m5U54) in all tRNAs, and that of position 341 (m5U341) in tmRNA (transfer-mRNA). The polypeptide is tRNA/tmRNA (uracil-C(5))-methyltransferase (Haemophilus influenzae (strain PittEE)).